The primary structure comprises 150 residues: Large ribosomal subunit protein bL9 (150 aa).

Belongs to the bacterial ribosomal protein bL9 family.

Functionally, binds to the 23S rRNA. This Pectobacterium carotovorum subsp. carotovorum (strain PC1) protein is Large ribosomal subunit protein bL9.